Consider the following 199-residue polypeptide: Dephospho-CoA kinase (199 aa).

Positions 4–199 (VLGITGGIAT…KWLEEQIGKK (196 aa)) constitute a DPCK domain. 12 to 17 (ATGKST) is a binding site for ATP.

This sequence belongs to the CoaE family.

It localises to the cytoplasm. It catalyses the reaction 3'-dephospho-CoA + ATP = ADP + CoA + H(+). Its pathway is cofactor biosynthesis; coenzyme A biosynthesis; CoA from (R)-pantothenate: step 5/5. Its function is as follows. Catalyzes the phosphorylation of the 3'-hydroxyl group of dephosphocoenzyme A to form coenzyme A. This Enterococcus faecalis (strain ATCC 700802 / V583) protein is Dephospho-CoA kinase.